We begin with the raw amino-acid sequence, 286 residues long: Aquaporin NIP4-1 (286 aa).

A run of 2 helical transmembrane segments spans residues 59-79 (VMVE…AALM) and 86-106 (LTFP…LSWL). The short motif at 112–114 (NPA) is the NPA 1 element. A run of 3 helical transmembrane segments spans residues 133 to 153 (LYVA…NAVM), 173 to 193 (LPFL…ATVA), and 201 to 221 (TVGG…IGPV). Positions 227–229 (NPA) match the NPA 2 motif. A helical transmembrane segment spans residues 241-261 (YDGVWIYVVAPVAGMLVGALC).

It belongs to the MIP/aquaporin (TC 1.A.8) family. NIP (TC 1.A.8.12) subfamily. As to expression, expressed in leaves and at lower levels in roots.

The protein localises to the membrane. In terms of biological role, aquaporins facilitate the transport of water and small neutral solutes across cell membranes. The sequence is that of Aquaporin NIP4-1 (NIP4-1) from Oryza sativa subsp. japonica (Rice).